A 322-amino-acid chain; its full sequence is Eukaryotic translation initiation factor 3 subunit I (322 aa).

5 WD repeats span residues 4–43, 46–85, 141–180, 184–223, and 281–322; these read GHER…RLGT, GHQG…VIAS, MTES…KVVD, DHSA…CLKS, and GHFG…NIFE.

It belongs to the eIF-3 subunit I family. As to quaternary structure, component of the eukaryotic translation initiation factor 3 (eIF-3) complex. The eIF-3 complex interacts with pix.

It localises to the cytoplasm. Functionally, component of the eukaryotic translation initiation factor 3 (eIF-3) complex, which is involved in protein synthesis of a specialized repertoire of mRNAs and, together with other initiation factors, stimulates binding of mRNA and methionyl-tRNAi to the 40S ribosome. The eIF-3 complex specifically targets and initiates translation of a subset of mRNAs involved in cell proliferation. This chain is Eukaryotic translation initiation factor 3 subunit I, found in Drosophila yakuba (Fruit fly).